We begin with the raw amino-acid sequence, 208 residues long: ATP phosphoribosyltransferase (208 aa).

It belongs to the ATP phosphoribosyltransferase family. Short subfamily. Heteromultimer composed of HisG and HisZ subunits.

It localises to the cytoplasm. It carries out the reaction 1-(5-phospho-beta-D-ribosyl)-ATP + diphosphate = 5-phospho-alpha-D-ribose 1-diphosphate + ATP. The protein operates within amino-acid biosynthesis; L-histidine biosynthesis; L-histidine from 5-phospho-alpha-D-ribose 1-diphosphate: step 1/9. Its function is as follows. Catalyzes the condensation of ATP and 5-phosphoribose 1-diphosphate to form N'-(5'-phosphoribosyl)-ATP (PR-ATP). Has a crucial role in the pathway because the rate of histidine biosynthesis seems to be controlled primarily by regulation of HisG enzymatic activity. This Thermotoga maritima (strain ATCC 43589 / DSM 3109 / JCM 10099 / NBRC 100826 / MSB8) protein is ATP phosphoribosyltransferase (hisG).